Reading from the N-terminus, the 120-residue chain is Basic phospholipase A2 homolog LmutTX (120 aa).

Disulfide bonds link cysteine 26-cysteine 114, cysteine 28-cysteine 44, cysteine 43-cysteine 95, cysteine 49-cysteine 120, cysteine 50-cysteine 88, cysteine 57-cysteine 81, and cysteine 75-cysteine 86.

It belongs to the phospholipase A2 family. Group II subfamily. K49 sub-subfamily. In terms of assembly, monomer. In terms of tissue distribution, expressed by the venom gland.

It localises to the secreted. Its function is as follows. Snake venom phospholipase A2 homolog that lacks enzymatic activity. Shows moderate cytotoxicity against C2C12 myotubes (activity above 200 ug/mL). Also shows antibacterial activity against both Gram-positive and Gram-negative bacteria. A model of myotoxic mechanism has been proposed: an apo Lys49-PLA2 is activated by the entrance of a hydrophobic molecule (e.g. fatty acid) at the hydrophobic channel of the protein leading to a reorientation of a monomer. This reorientation causes a transition between 'inactive' to 'active' states, causing alignment of C-terminal and membrane-docking sites (MDoS) side-by-side and putting the membrane-disruption sites (MDiS) in the same plane, exposed to solvent and in a symmetric position for both monomers. The MDoS region stabilizes the toxin on membrane by the interaction of charged residues with phospholipid head groups. Subsequently, the MDiS region destabilizes the membrane with penetration of hydrophobic residues. This insertion causes a disorganization of the membrane, allowing an uncontrolled influx of ions (i.e. calcium and sodium), and eventually triggering irreversible intracellular alterations and cell death. In Lachesis muta muta (Bushmaster), this protein is Basic phospholipase A2 homolog LmutTX.